Consider the following 227-residue polypeptide: Ubiquitin domain-containing protein 1 (227 aa).

A compositionally biased stretch (basic and acidic residues) spans 1-14 (MGGCVGRERAETRG). Residues 1–45 (MGGCVGRERAETRGRGSRTQRKRGGRNEPLKKDKPKWKSDYPMTE) form a disordered region. Basic residues predominate over residues 15–24 (RGSRTQRKRG). Residues 25 to 39 (GRNEPLKKDKPKWKS) show a composition bias toward basic and acidic residues. The Ubiquitin-like domain occupies 150–225 (FQLKVRLSTG…IQVIVNQPAP (76 aa)).

Its function is as follows. May be involved in the regulation of cellular senescence through a positive feedback loop with TP53. The polypeptide is Ubiquitin domain-containing protein 1 (ubtd1) (Danio rerio (Zebrafish)).